A 290-amino-acid polypeptide reads, in one-letter code: ATP synthase gamma chain (290 aa).

Belongs to the ATPase gamma chain family. In terms of assembly, F-type ATPases have 2 components, CF(1) - the catalytic core - and CF(0) - the membrane proton channel. CF(1) has five subunits: alpha(3), beta(3), gamma(1), delta(1), epsilon(1). CF(0) has three main subunits: a, b and c.

It is found in the cell inner membrane. Functionally, produces ATP from ADP in the presence of a proton gradient across the membrane. The gamma chain is believed to be important in regulating ATPase activity and the flow of protons through the CF(0) complex. This chain is ATP synthase gamma chain, found in Desulfotalea psychrophila (strain LSv54 / DSM 12343).